The primary structure comprises 158 residues: Mitotic-spindle organizing protein 2 (158 aa).

Ser-34 is subject to Phosphoserine. The segment at 81-158 (AGQRVASDSQ…PGRSPPRSGT (78 aa)) is disordered. Residues 110–119 (KGGGALGGGP) are compositionally biased toward gly residues. Position 152 is a phosphoserine (Ser-152).

The protein belongs to the MOZART2 family. In terms of assembly, associates with the gamma-tubulin ring complex (gTuRC) consisting of TUBGCP2, TUBGCP3, TUBGCP4, TUBGCP5 and TUBGCP6 and gamma-tubulin TUBG1 or TUBG2; within the complex, interacts with TUBGCP2; the interaction plays a role in gTuRC activation.

Its subcellular location is the cytoplasm. The protein localises to the cytoskeleton. The protein resides in the microtubule organizing center. It localises to the centrosome. It is found in the spindle. Required for the recruitment and the assembly of the gamma-tubulin ring complex (gTuRC) at the centrosome. The gTuRC regulates the minus-end nucleation of alpha-beta tubulin heterodimers that grow into microtubule protafilaments, a critical step in centrosome duplication and spindle formation. The chain is Mitotic-spindle organizing protein 2 (MZT2) from Bos taurus (Bovine).